We begin with the raw amino-acid sequence, 147 residues long: Protein-export protein SecB (147 aa).

It belongs to the SecB family. As to quaternary structure, homotetramer, a dimer of dimers. One homotetramer interacts with 1 SecA dimer.

It is found in the cytoplasm. Functionally, one of the proteins required for the normal export of preproteins out of the cell cytoplasm. It is a molecular chaperone that binds to a subset of precursor proteins, maintaining them in a translocation-competent state. It also specifically binds to its receptor SecA. The sequence is that of Protein-export protein SecB from Neisseria meningitidis serogroup A / serotype 4A (strain DSM 15465 / Z2491).